The sequence spans 332 residues: Eukaryotic translation initiation factor 3 subunit H (332 aa).

Positions 18 to 153 (VQVDGLTVLK…LKAFRLSDEM (136 aa)) constitute an MPN domain. The interval 251 to 285 (QQQKENYLQRRQQENQSRIQRGEDPLPDEDLSKMF) is disordered.

This sequence belongs to the eIF-3 subunit H family. As to quaternary structure, component of the eukaryotic translation initiation factor 3 (eIF-3) complex.

It is found in the cytoplasm. Its function is as follows. Component of the eukaryotic translation initiation factor 3 (eIF-3) complex, which is involved in protein synthesis of a specialized repertoire of mRNAs and, together with other initiation factors, stimulates binding of mRNA and methionyl-tRNAi to the 40S ribosome. The eIF-3 complex specifically targets and initiates translation of a subset of mRNAs involved in cell proliferation. The chain is Eukaryotic translation initiation factor 3 subunit H from Nematostella vectensis (Starlet sea anemone).